The chain runs to 435 residues: Dual specificity mitogen-activated protein kinase kinase jkk-1 (435 aa).

Over residues 35-49 (RDRRSTSVDQKHKEC) the composition is skewed to basic and acidic residues. Positions 35–90 (RDRRSTSVDQKHKECSSTSSSPQHQRPNNIGYLTSPMERKFTPLSMKPSPSRRDTE) are disordered. The segment covering 50 to 66 (SSTSSSPQHQRPNNIGY) has biased composition (polar residues). A Protein kinase domain is found at 122–385 (IHIISLLGSG…YRQLMKHDFY (264 aa)). ATP is bound by residues 128 to 136 (LGSGSCGVV) and lysine 149. Aspartate 246 functions as the Proton acceptor in the catalytic mechanism.

It belongs to the protein kinase superfamily. STE Ser/Thr protein kinase family. MAP kinase kinase subfamily. Interacts with unc-16. It depends on Mg(2+) as a cofactor. In terms of tissue distribution, expressed in most neurons, including nerve ring, head ganglions, dorsal and ventral nerve cords and tail ganglions.

The protein localises to the cytoplasm. It is found in the perikaryon. It localises to the cell projection. Its subcellular location is the axon. The catalysed reaction is L-seryl-[protein] + ATP = O-phospho-L-seryl-[protein] + ADP + H(+). It catalyses the reaction L-threonyl-[protein] + ATP = O-phospho-L-threonyl-[protein] + ADP + H(+). The enzyme catalyses L-tyrosyl-[protein] + ATP = O-phospho-L-tyrosyl-[protein] + ADP + H(+). In terms of biological role, dual specificity protein kinase which acts as an essential component of the JNK signal transduction pathway. May phosphorylate jnk-1. Plays a role in coordinating locomotion via D-type GABAergic motoneurons and in regulating synaptic vesicle transport downstream of adapter protein unc-16 and probably by activating jnk-1. Positively regulates lifespan. Upon environmental stress such as heat stress regulates daf-16 nuclear translocation probably by activating jnk-1. Regulates germline cell apoptosis in response to heavy metals such as Cu(2+) and to arsenite. This is Dual specificity mitogen-activated protein kinase kinase jkk-1 from Caenorhabditis elegans.